The primary structure comprises 233 residues: Methyltransferase srdJ (233 aa).

Residues 1–32 (MFQVQTAGTRTGTSSPDTTTSEAGLGSTPPMP) are disordered. Residues 9–21 (TRTGTSSPDTTTS) show a composition bias toward low complexity. S-adenosyl-L-methionine-binding residues include Trp40, Trp52, and Gly81. Positions 140–146 (EISSQKY) match the Required for methyltransferase activity motif.

This sequence belongs to the methyltransferase superfamily.

In terms of biological role, methyltransferase; part of the gene cluster that mediates the biosynthesis of sordarial, a salicylic aldehyde structurally related to the phytotoxin pyriculol. The most interesting aspect of this pathway is formation of an aromatic product from the highly reducing polyketide synthase srdA. SrdA synthesizes a reduced polyketide chain from one molecule of acetyl-CoA and five molecules of malonyl-CoA. The polyketide chain is then reductively released as an aldehyde. The oxidoreductases srdC, srdD and srdE then oxidize one of the hydroxy groups to facilitate the intramolecular aldol condensation, followed by dehydration to yield a salicylic aldehyde. This aldehyde can undergo facile reduction by endogenous reductases to yield the alcohol 1-hydroxy-2-hydroxymethyl-3-pent-1,3-dienylbenzene. The flavin-dependent srdI counteract against the propensity of the aldehydes to be reduced under physiological conditions and is responsible for reoxidizing 1-hydroxy-2-hydroxymethyl-3-pent-1,3-dienylbenzene back to the salicylic aldehyde. This salicylic aldehyde is then selectively epoxidized by the cupin-domain-containing oxidoreductase srdB to yield the epoxide, which can be hydrolyzed stereoselectively by the hydrolase srdG to give the final product sordarial. The sequence is that of Methyltransferase srdJ from Neurospora crassa (strain ATCC 24698 / 74-OR23-1A / CBS 708.71 / DSM 1257 / FGSC 987).